We begin with the raw amino-acid sequence, 101 residues long: Glutenin, high molecular weight subunit PC256 (101 aa).

Residues 1–27 show a composition bias toward polar residues; it reads EKLGQGQQPRQWLQPRQGQQGYYPTSP. The segment at 1-65 is disordered; sequence EKLGQGQQPR…QGYDSPYHVS (65 aa). A compositionally biased stretch (low complexity) spans 41 to 62; it reads QGYYPTSPQQSGQGQQGYDSPY.

This sequence belongs to the gliadin/glutenin family. Disulfide-bridge linked aggregates.

In terms of biological role, glutenins are high-molecular weight seed storage proteins of wheat endosperm. Thought to be responsible for the visco-elastic property of wheat dough. This chain is Glutenin, high molecular weight subunit PC256, found in Triticum aestivum (Wheat).